The sequence spans 76 residues: MIYKVFYQETKERNPRREQTKTLYVTIDAANELEGRIAARKLVEENTAYNIEFIELLSDKHLEYEKETGVFELTEF.

It belongs to the RNA polymerase subunit epsilon family. RNAP is composed of a core of 2 alpha, a beta and a beta' subunit. The core is associated with a delta subunit, and at least one of epsilon or omega. When a sigma factor is associated with the core the holoenzyme is formed, which can initiate transcription.

It catalyses the reaction RNA(n) + a ribonucleoside 5'-triphosphate = RNA(n+1) + diphosphate. Its function is as follows. A non-essential component of RNA polymerase (RNAP). This is DNA-directed RNA polymerase subunit epsilon from Streptococcus agalactiae serotype Ia (strain ATCC 27591 / A909 / CDC SS700).